Reading from the N-terminus, the 62-residue chain is uncharacterized protein (62 aa).

The N-terminal stretch at 1 to 22 is a signal peptide; sequence MVNVALLLDQIIATPLRSMVEA.

This is an uncharacterized protein from Archaeoglobus fulgidus (strain ATCC 49558 / DSM 4304 / JCM 9628 / NBRC 100126 / VC-16).